A 907-amino-acid chain; its full sequence is Envelope glycoprotein B (907 aa).

The signal sequence occupies residues Met-1–Ala-22. Residues Val-23 to Pro-751 are Virion surface-facing. Residues Arg-29–Thr-62 are disordered. A compositionally biased stretch (low complexity) spans His-41 to Thr-62. Asn-68, Asn-73, and Asn-85 each carry an N-linked (GlcNAc...) asparagine; by host glycan. Intrachain disulfides connect Cys-94–Cys-551, Cys-111–Cys-507, Cys-185–Cys-250, and Cys-344–Cys-391. The tract at residues Ser-152–Thr-158 is involved in fusion and/or binding to host membrane. Asn-208 is a glycosylation site (N-linked (GlcNAc...) asparagine; by host). The segment at Gly-237–Glu-244 is involved in fusion and/or binding to host membrane. N-linked (GlcNAc...) asparagine; by host glycans are attached at residues Asn-281, Asn-286, Asn-302, Asn-341, Asn-383, Asn-405, Asn-409, Asn-417, Asn-447, Asn-452, Asn-456, Asn-466, Asn-555, and Asn-586. Residues Cys-574 and Cys-611 are joined by a disulfide bond. Hydrophobic membrane proximal region stretches follow at residues Val-697–Lys-749 and Tyr-708–Leu-748. The helical transmembrane segment at Phe-752–Tyr-772 threads the bilayer. Residues Thr-773–Val-907 are Intravirion-facing. Polar residues-rich tracts occupy residues Val-798–Ala-810 and Arg-860–Asp-877. Disordered regions lie at residues Val-798–Pro-838 and Arg-860–Val-907. Basic and acidic residues predominate over residues Lys-878–Arg-887. The short motif at Tyr-895 to Leu-898 is the Internalization motif element.

It belongs to the herpesviridae glycoprotein B family. Homotrimer; disulfide-linked. Binds to heparan sulfate proteoglycans. Interacts with gH/gL heterodimer. Interacts with host C-type lectin CD209/DC-SIGN. Interacts with host ITGB1, EGFR, and PDGFRA. A proteolytic cleavage by host furin generates two subunits that remain linked by disulfide bonds.

It localises to the virion membrane. Its subcellular location is the host cell membrane. It is found in the host endosome membrane. The protein localises to the host Golgi apparatus membrane. Its function is as follows. Envelope glycoprotein that plays a role in host cell entry, cell to-cell virus transmission, and fusion of infected cells. May be involved in the initial attachment via binding to heparan sulfate together with the gM/gN complex that binds heparin with higher affinity. Interacts with host integrin ITGB1, PDGFRA and EGFR that likely serve as postattachment entry receptors. Also participates in the fusion of viral and cellular membranes leading to virus entry into the host cell. Membrane fusion is mediated by the fusion machinery composed at least of gB and the heterodimer gH/gL. The protein is Envelope glycoprotein B of Homo sapiens (Human).